The chain runs to 312 residues: tRNA dimethylallyltransferase (312 aa).

17-24 (GPTASGKS) contributes to the ATP binding site. 19–24 (TASGKS) lines the substrate pocket.

It belongs to the IPP transferase family. In terms of assembly, monomer. Mg(2+) serves as cofactor.

It carries out the reaction adenosine(37) in tRNA + dimethylallyl diphosphate = N(6)-dimethylallyladenosine(37) in tRNA + diphosphate. In terms of biological role, catalyzes the transfer of a dimethylallyl group onto the adenine at position 37 in tRNAs that read codons beginning with uridine, leading to the formation of N6-(dimethylallyl)adenosine (i(6)A). In Zymomonas mobilis subsp. mobilis (strain ATCC 31821 / ZM4 / CP4), this protein is tRNA dimethylallyltransferase.